The sequence spans 485 residues: Ribulose bisphosphate carboxylase large chain 2 (485 aa).

Positions 125 and 175 each coordinate substrate. K177 serves as the catalytic Proton acceptor. Substrate is bound at residue K179. Residues K203, D205, and E206 each coordinate Mg(2+). N6-carboxylysine is present on K203. The Proton acceptor role is filled by H295. R296, H328, and S380 together coordinate substrate.

This sequence belongs to the RuBisCO large chain family. Type I subfamily. In terms of assembly, heterohexadecamer of 8 large chains and 8 small chains. Mg(2+) is required as a cofactor.

The catalysed reaction is 2 (2R)-3-phosphoglycerate + 2 H(+) = D-ribulose 1,5-bisphosphate + CO2 + H2O. The enzyme catalyses D-ribulose 1,5-bisphosphate + O2 = 2-phosphoglycolate + (2R)-3-phosphoglycerate + 2 H(+). Its function is as follows. RuBisCO catalyzes two reactions: the carboxylation of D-ribulose 1,5-bisphosphate, the primary event in carbon dioxide fixation, as well as the oxidative fragmentation of the pentose substrate. Both reactions occur simultaneously and in competition at the same active site. The polypeptide is Ribulose bisphosphate carboxylase large chain 2 (Methylibium petroleiphilum (strain ATCC BAA-1232 / LMG 22953 / PM1)).